The following is a 545-amino-acid chain: Glucose-6-phosphate isomerase (545 aa).

Catalysis depends on E351, which acts as the Proton donor. Residues H382 and K510 contribute to the active site.

The protein belongs to the GPI family.

The protein localises to the cytoplasm. The catalysed reaction is alpha-D-glucose 6-phosphate = beta-D-fructose 6-phosphate. The protein operates within carbohydrate biosynthesis; gluconeogenesis. Its pathway is carbohydrate degradation; glycolysis; D-glyceraldehyde 3-phosphate and glycerone phosphate from D-glucose: step 2/4. Its function is as follows. Catalyzes the reversible isomerization of glucose-6-phosphate to fructose-6-phosphate. The sequence is that of Glucose-6-phosphate isomerase from Shewanella sp. (strain MR-4).